The primary structure comprises 454 residues: Keratin, type I cuticular Ha5 (454 aa).

A head region spans residues 1-97 (MASKCLKASF…FGEGILTGNE (97 aa)). One can recognise an IF rod domain in the interval 97-407 (EKETMQFLND…GLLDSEDCKL (311 aa)). The tract at residues 98–125 (KETMQFLNDRLASYLEKCGSWSGRTRSW) is coil 1A. The linker 1 stretch occupies residues 134–142 (SNSALPVPD). The coil 1B stretch occupies residues 143–243 (YQSYFQTIEE…HEEEVNSLRC (101 aa)). The tract at residues 244 to 259 (QLGDRLNVEVDAAPPV) is linker 12. Residues 260-403 (DLNRVLNEMR…NTYRGLLDSE (144 aa)) are coil 2. The tail stretch occupies residues 404-454 (DCKLPCNPCAPDHSPSKSCLPCLPAASCGPGMARTTCSPRPICVPCPGSRF).

Belongs to the intermediate filament family.

This chain is Keratin, type I cuticular Ha5, found in Bos taurus (Bovine).